Reading from the N-terminus, the 157-residue chain is UPF0225 protein PA14_50900 (157 aa).

This sequence belongs to the UPF0225 family.

This is UPF0225 protein PA14_50900 from Pseudomonas aeruginosa (strain UCBPP-PA14).